We begin with the raw amino-acid sequence, 102 residues long: Small ribosomal subunit protein uS10 (102 aa).

It belongs to the universal ribosomal protein uS10 family. Part of the 30S ribosomal subunit.

Its function is as follows. Involved in the binding of tRNA to the ribosomes. This chain is Small ribosomal subunit protein uS10, found in Moorella thermoacetica (strain ATCC 39073 / JCM 9320).